A 209-amino-acid polypeptide reads, in one-letter code: Large ribosomal subunit protein uL3 (209 aa).

The disordered stretch occupies residues 133–152; it reads THGNSLSHRVPGSIGQNQTP. The residue at position 150 (Gln150) is an N5-methylglutamine.

It belongs to the universal ribosomal protein uL3 family. As to quaternary structure, part of the 50S ribosomal subunit. Forms a cluster with proteins L14 and L19. In terms of processing, methylated by PrmB.

In terms of biological role, one of the primary rRNA binding proteins, it binds directly near the 3'-end of the 23S rRNA, where it nucleates assembly of the 50S subunit. In Sodalis glossinidius (strain morsitans), this protein is Large ribosomal subunit protein uL3.